The sequence spans 2715 residues: G surface protein, allelic form 156 (2715 aa).

The N-terminal stretch at 1–20 (MNNKFIIFSLLLALVASQTY) is a signal peptide. PSA repeat units follow at residues 111–171 (KTLD…NTCD), 177–237 (FATD…RICD), 243–303 (LTTD…KACA), 309–366 (IATN…KTCA), 372–404 (NNTH…APTT), 405–467 (MTTN…KTCV), 473–530 (NTTH…KQCV), 536–596 (TTTH…KACS), 602–673 (FTTT…KSCA), 688–748 (GFTF…KTCA), 752–812 (QTTH…ATCA), 820–895 (YDSD…GACT), 934–1001 (GLTF…AECA), 1008–1067 (GLDH…SNCA), 1073–1141 (GLTT…THCP), 1147–1215 (GLTD…TECA), 1221–1289 (GLTD…TECA), 1295–1363 (GLTN…TECA), 1369–1437 (GLTN…TECA), 1443–1507 (GLTK…LNCS), 1513–1578 (GFVH…TDCA), 1586–1652 (TITF…ATCD), 1693–1751 (TFNH…KTCD), 1759–1819 (RDDD…LNCG), 1827–1898 (YDTH…KSCT), 1904–1976 (TTTH…KSCA), 1984–2044 (YDDD…KSCD), 2080–2149 (FATD…KNCS), 2155–2215 (LTSE…KDCQ), 2219–2286 (GTTH…TSCK), 2290–2355 (WNND…TSCA), 2359–2430 (YTTH…QSCA), 2434–2500 (GTTH…LTCA), and 2505–2573 (GTAT…TACT).

It localises to the cell membrane. Functionally, this protein is the surface antigen or immobilization antigen of Paramecium primaurelia. The protein is G surface protein, allelic form 156 (156G) of Paramecium primaurelia.